The chain runs to 388 residues: Chorismate synthase (388 aa).

The NADP(+) site is built by R40 and R46. FMN-binding positions include 131-133 (RSS), 252-253 (NA), G296, 311-315 (KPIPT), and R337.

Belongs to the chorismate synthase family. Homotetramer. It depends on FMNH2 as a cofactor.

It carries out the reaction 5-O-(1-carboxyvinyl)-3-phosphoshikimate = chorismate + phosphate. Its pathway is metabolic intermediate biosynthesis; chorismate biosynthesis; chorismate from D-erythrose 4-phosphate and phosphoenolpyruvate: step 7/7. Catalyzes the anti-1,4-elimination of the C-3 phosphate and the C-6 proR hydrogen from 5-enolpyruvylshikimate-3-phosphate (EPSP) to yield chorismate, which is the branch point compound that serves as the starting substrate for the three terminal pathways of aromatic amino acid biosynthesis. This reaction introduces a second double bond into the aromatic ring system. This chain is Chorismate synthase, found in Limosilactobacillus fermentum (strain NBRC 3956 / LMG 18251) (Lactobacillus fermentum).